The chain runs to 709 residues: MERTAGKELALAPLQDWGEETEDGAVYSVSLRRQRSQRSTPERSGEGQTPIPATDTFLHYRTSKVRALRAARLERLVHELVSGDREQDPGFVPAFLATHRAFVPTARVLGFLLPPPPPPPPPPAGVDSKRTEGQDLNFSKNLRAVVSVLGSWLRNHPQDFRDPPDHQNLGNVRIFLGWAAPGGAEAREAEKLLEDFLKEAKGEQTEEEKRLAWSGPPRIAQTPGSEFAEDCVEEEGPSSEGPELLDFSVDDVAEQLTLMDVELFLRVRSCECLGSMWSQRDRPGAAGISPTVRATVAQFNTVTGCVLGSVLAAPGLAASQRAQRIEKWIRIAQRCRELRNFSSLRAILSALQSNPIYRLKRSWGAVSREPLSVFRKLSQIFSDEDNHLSSRAILSQEETTEDDDCPSGSLPSKLPPGPVPYLGTFLTDLVMLDTALPDTLKGNLINFEKRRKEWEILARIQQLQQRCQRYSLSPRPPILAALRAQRQLSEEQSYRVSRVIEPPAASCPSSPRIRRRISLTKRLSAKLSREKNSSPGGSPGDPSSPTSSVSPGSPPSSPRNREPPPPGSPPASPGPQSPSTKLSLTMDPPGPWPVTLTPSSSRVPLLGQQTSEARVIRVSINNNHGNLYRSILLTCQDKAPSVVQRALEKHNVPQPWARDYQLFQVLPGDRELLIPDGANVFYAMSPAAPGDFLLRRKEGTGHTLSASPT.

The tract at residues 26–55 is disordered; that stretch reads VYSVSLRRQRSQRSTPERSGEGQTPIPATD. The region spanning 64-201 is the N-terminal Ras-GEF domain; that stretch reads KVRALRAARL…LLEDFLKEAK (138 aa). Disordered stretches follow at residues 203–225, 395–416, and 502–604; these read EQTEEEKRLAWSGPPRIAQTPGS, SQEETTEDDDCPSGSLPSKLPP, and PPAA…SRVP. In terms of domain architecture, Ras-GEF spans 248-503; the sequence is SVDDVAEQLT…YRVSRVIEPP (256 aa). 2 stretches are compositionally biased toward low complexity: residues 502-511 and 533-551; these read PPAASCPSSP and SSPGGSPGDPSSPTSSVSP. S506 and S510 each carry phosphoserine. Residues 552–576 are compositionally biased toward pro residues; that stretch reads GSPPSSPRNREPPPPGSPPASPGPQ. Phosphoserine occurs at positions 553, 568, 572, 577, and 600. The interval 611–706 is interaction with HRAS, MRAS and RIT1; it reads SEARVIRVSI…KEGTGHTLSA (96 aa). Residues 612-699 form the Ras-associating domain; the sequence is EARVIRVSIN…GDFLLRRKEG (88 aa).

Interacts with GTP-bound forms of RIT1, HRAS and MRAS. In terms of tissue distribution, widely expressed. Expressed at high levels in the liver and kidney.

In terms of biological role, guanine nucleotide exchange factor (GEF) for Ral-A. Potential effector of GTPase HRas and Ras-related protein M-Ras. Negatively regulates Elk-1-dependent gene induction downstream of HRas and MEKK1. This chain is Ral guanine nucleotide dissociation stimulator-like 3 (Rgl3), found in Mus musculus (Mouse).